The sequence spans 99 residues: Co-chaperonin GroES (99 aa).

The protein belongs to the GroES chaperonin family. In terms of assembly, heptamer of 7 subunits arranged in a ring. Interacts with the chaperonin GroEL.

It is found in the cytoplasm. Together with the chaperonin GroEL, plays an essential role in assisting protein folding. The GroEL-GroES system forms a nano-cage that allows encapsulation of the non-native substrate proteins and provides a physical environment optimized to promote and accelerate protein folding. GroES binds to the apical surface of the GroEL ring, thereby capping the opening of the GroEL channel. This is Co-chaperonin GroES from Rhodococcus erythropolis (strain PR4 / NBRC 100887).